A 101-amino-acid chain; its full sequence is Urease subunit beta (101 aa).

Belongs to the urease beta subunit family. Heterotrimer of UreA (gamma), UreB (beta) and UreC (alpha) subunits. Three heterotrimers associate to form the active enzyme.

It is found in the cytoplasm. The catalysed reaction is urea + 2 H2O + H(+) = hydrogencarbonate + 2 NH4(+). The protein operates within nitrogen metabolism; urea degradation; CO(2) and NH(3) from urea (urease route): step 1/1. This Rhizobium etli (strain ATCC 51251 / DSM 11541 / JCM 21823 / NBRC 15573 / CFN 42) protein is Urease subunit beta.